A 148-amino-acid polypeptide reads, in one-letter code: MFQGETAITLDDKGRMVVPVVYRDLIARMSANRLVLTYNPFEAGCLWLYVEKEWERVRDELMVKPNAHRVVRVLQQKLVGSSALLELDANGRISVPSSHRSAVAIEKKAVLLGMGDKFELWSEQAHHALIQQTLSDGDLGDGLLDLRL.

2 SpoVT-AbrB domains span residues Glu-5–Glu-53 and Ser-82–Ala-125.

Belongs to the MraZ family. Forms oligomers.

It localises to the cytoplasm. The protein resides in the nucleoid. This chain is Transcriptional regulator MraZ, found in Xylella fastidiosa (strain Temecula1 / ATCC 700964).